The primary structure comprises 165 residues: MTLEEFSAGEQKTERMDKVGDALEEVLSKALSQRTITVGVYEAAKLLNVDPDNVVLCLLAADEDDDRDVALQIHFTLIQAFCCENDINILRVSNPGRLAELLLLETDASPAASEGAEQPPDLHCVLVTNPHSSQWKDPALSQLICFCRESRYMDQWVPVINLPER.

T2 bears the Phosphothreonine mark.

This sequence belongs to the GADD45 family. Interacts with AURKA, PCNA, GADD45GIP1 and MAPK14.

Its subcellular location is the nucleus. Functionally, might affect PCNA interaction with some CDK (cell division protein kinase) complexes; stimulates DNA excision repair in vitro and inhibits entry of cells into S phase. In T-cells, functions as a regulator of p38 MAPKs by inhibiting p88 phosphorylation and activity. The protein is Growth arrest and DNA damage-inducible protein GADD45 alpha (GADD45A) of Felis catus (Cat).